A 472-amino-acid polypeptide reads, in one-letter code: Proline--tRNA ligase (472 aa).

Belongs to the class-II aminoacyl-tRNA synthetase family. ProS type 3 subfamily. As to quaternary structure, homodimer.

It localises to the cytoplasm. The catalysed reaction is tRNA(Pro) + L-proline + ATP = L-prolyl-tRNA(Pro) + AMP + diphosphate. Functionally, catalyzes the attachment of proline to tRNA(Pro) in a two-step reaction: proline is first activated by ATP to form Pro-AMP and then transferred to the acceptor end of tRNA(Pro). In Ureaplasma parvum serovar 3 (strain ATCC 27815 / 27 / NCTC 11736), this protein is Proline--tRNA ligase.